A 241-amino-acid polypeptide reads, in one-letter code: Ashwin (241 aa).

3 disordered regions span residues 1–21 (MAAQ…SARS), 82–102 (KMME…SVTA), and 212–241 (KRSV…CTWP). Residues 11–21 (GGKEERVSARS) show a composition bias toward basic and acidic residues.

This sequence belongs to the ashwin family.

It is found in the nucleus. In Gallus gallus (Chicken), this protein is Ashwin.